The following is a 131-amino-acid chain: Large ribosomal subunit protein bL12c (131 aa).

The span at 106 to 125 shows a compositional bias: basic and acidic residues; it reads KDNTNKENSEEIKQQLEEAG. Residues 106–131 form a disordered region; it reads KDNTNKENSEEIKQQLEEAGAKVSIK.

Belongs to the bacterial ribosomal protein bL12 family. In terms of assembly, homodimer. Part of the ribosomal stalk of the 50S ribosomal subunit. Forms a multimeric L10(L12)X complex, where L10 forms an elongated spine to which 2 to 4 L12 dimers bind in a sequential fashion. Binds GTP-bound translation factors.

The protein localises to the plastid. Its subcellular location is the chloroplast. In terms of biological role, forms part of the ribosomal stalk which helps the ribosome interact with GTP-bound translation factors. Is thus essential for accurate translation. The sequence is that of Large ribosomal subunit protein bL12c from Gracilaria tenuistipitata var. liui (Red alga).